The following is a 389-amino-acid chain: Transmembrane protease serine 11A (389 aa).

At Met1 to Ala23 the chain is on the cytoplasmic side. The chain crosses the membrane as a helical; Signal-anchor for type II membrane protein span at residues Leu24–Ile44. The 118-residue stretch at Val31 to Lys148 folds into the SEA domain. Residues Gln45 to Leu389 are Extracellular-facing. One can recognise a Peptidase S1 domain in the interval Ile158–Gly388. Cys183 and Cys199 are disulfide-bonded. Residues His198 and Asp243 each act as charge relay system in the active site. Asn274 carries an N-linked (GlcNAc...) asparagine glycan. Disulfide bonds link Cys308–Cys324 and Cys335–Cys364. Ser339 serves as the catalytic Charge relay system.

Belongs to the peptidase S1 family.

Its subcellular location is the membrane. Functionally, probable serine protease which may play a role in cellular senescence. Overexpression inhibits cell growth and induce G1 cell cycle arrest. The chain is Transmembrane protease serine 11A (Tmprss11a) from Mus musculus (Mouse).